Reading from the N-terminus, the 224-residue chain is Octanoyltransferase (224 aa).

A BPL/LPL catalytic domain is found at 33 to 213 (GTTAETMLLL…ALQAEFGREA (181 aa)). The tract at residues 51–71 (GKRTTDDERPTDGTPVVDVDR) is disordered. Substrate is bound by residues 71–78 (RGGKITWH), 143–145 (AIG), and 156–158 (GFA). Cys-174 functions as the Acyl-thioester intermediate in the catalytic mechanism.

Belongs to the LipB family.

Its subcellular location is the cytoplasm. The enzyme catalyses octanoyl-[ACP] + L-lysyl-[protein] = N(6)-octanoyl-L-lysyl-[protein] + holo-[ACP] + H(+). Its pathway is protein modification; protein lipoylation via endogenous pathway; protein N(6)-(lipoyl)lysine from octanoyl-[acyl-carrier-protein]: step 1/2. Catalyzes the transfer of endogenously produced octanoic acid from octanoyl-acyl-carrier-protein onto the lipoyl domains of lipoate-dependent enzymes. Lipoyl-ACP can also act as a substrate although octanoyl-ACP is likely to be the physiological substrate. In Leifsonia xyli subsp. xyli (strain CTCB07), this protein is Octanoyltransferase.